We begin with the raw amino-acid sequence, 540 residues long: Chaperonin GroEL (540 aa).

ATP contacts are provided by residues 30 to 33, lysine 51, 87 to 91, glycine 415, and aspartate 495; these read TLGP and DGTTT.

This sequence belongs to the chaperonin (HSP60) family. As to quaternary structure, forms a cylinder of 14 subunits composed of two heptameric rings stacked back-to-back. Interacts with the co-chaperonin GroES.

It localises to the cytoplasm. It catalyses the reaction ATP + H2O + a folded polypeptide = ADP + phosphate + an unfolded polypeptide.. Functionally, together with its co-chaperonin GroES, plays an essential role in assisting protein folding. The GroEL-GroES system forms a nano-cage that allows encapsulation of the non-native substrate proteins and provides a physical environment optimized to promote and accelerate protein folding. The sequence is that of Chaperonin GroEL from Erwinia aphidicola.